The chain runs to 212 residues: Transcription antitermination protein NusB (212 aa).

2 disordered regions span residues 1-34 (MSDEQSTPASGRPPRQSRGGLTSTGARKAASKSN) and 169-212 (EHDR…QAAG). Low complexity predominate over residues 178-212 (APAQPAAKADTATDAVADAATDAAAADDAADQAAG).

Belongs to the NusB family.

In terms of biological role, involved in transcription antitermination. Required for transcription of ribosomal RNA (rRNA) genes. Binds specifically to the boxA antiterminator sequence of the ribosomal RNA (rrn) operons. The polypeptide is Transcription antitermination protein NusB (Delftia acidovorans (strain DSM 14801 / SPH-1)).